Here is a 349-residue protein sequence, read N- to C-terminus: Inositol 2-dehydrogenase (349 aa).

This sequence belongs to the Gfo/Idh/MocA family. In terms of assembly, homotetramer.

The enzyme catalyses myo-inositol + NAD(+) = scyllo-inosose + NADH + H(+). In terms of biological role, involved in the oxidation of myo-inositol (MI) to 2-keto-myo-inositol (2KMI or 2-inosose). The polypeptide is Inositol 2-dehydrogenase (Mycolicibacterium gilvum (strain PYR-GCK) (Mycobacterium gilvum (strain PYR-GCK))).